A 369-amino-acid polypeptide reads, in one-letter code: 3-isopropylmalate dehydrogenase (369 aa).

Residues Arg98, Arg108, Arg136, and Asp227 each coordinate substrate. Residues Asp227, Asp251, and Asp255 each contribute to the Mg(2+) site. 290–302 contacts NAD(+); the sequence is GSAPDIAGKGIAN.

It belongs to the isocitrate and isopropylmalate dehydrogenases family. LeuB type 1 subfamily. In terms of assembly, homodimer. Mg(2+) is required as a cofactor. Requires Mn(2+) as cofactor.

The protein localises to the cytoplasm. It carries out the reaction (2R,3S)-3-isopropylmalate + NAD(+) = 4-methyl-2-oxopentanoate + CO2 + NADH. It functions in the pathway amino-acid biosynthesis; L-leucine biosynthesis; L-leucine from 3-methyl-2-oxobutanoate: step 3/4. Catalyzes the oxidation of 3-carboxy-2-hydroxy-4-methylpentanoate (3-isopropylmalate) to 3-carboxy-4-methyl-2-oxopentanoate. The product decarboxylates to 4-methyl-2 oxopentanoate. The polypeptide is 3-isopropylmalate dehydrogenase (Gluconobacter oxydans (strain 621H) (Gluconobacter suboxydans)).